The following is a 237-amino-acid chain: Large ribosomal subunit protein uL3 (237 aa).

2 disordered regions span residues 133 to 155 (ASHGNSITHRSHGSTGQRQDPGK) and 213 to 237 (PENAPKPAGLRAGAKAEAAATEGAE). Residues 135–150 (HGNSITHRSHGSTGQR) show a composition bias toward polar residues. Gln-151 bears the N5-methylglutamine mark. The span at 220-237 (AGLRAGAKAEAAATEGAE) shows a compositional bias: low complexity.

It belongs to the universal ribosomal protein uL3 family. As to quaternary structure, part of the 50S ribosomal subunit. Forms a cluster with proteins L14 and L19. In terms of processing, methylated by PrmB.

Its function is as follows. One of the primary rRNA binding proteins, it binds directly near the 3'-end of the 23S rRNA, where it nucleates assembly of the 50S subunit. The protein is Large ribosomal subunit protein uL3 of Brucella suis biovar 1 (strain 1330).